Reading from the N-terminus, the 151-residue chain is UPF0178 protein PFLU_5917 (151 aa).

It belongs to the UPF0178 family.

The polypeptide is UPF0178 protein PFLU_5917 (Pseudomonas fluorescens (strain SBW25)).